The following is a 171-amino-acid chain: Transcription factor E (171 aa).

The HTH TFE/IIEalpha-type domain occupies 5–88; that stretch reads YEDPFIRIAV…RWRSRREEVE (84 aa).

It belongs to the TFE family. In terms of assembly, monomer. Interaction with RNA polymerase subunits RpoF and RpoE is necessary for Tfe stimulatory transcription activity. Able to interact with Tbp and RNA polymerase in the absence of DNA promoter. Interacts both with the preinitiation and elongation complexes.

Functionally, transcription factor that plays a role in the activation of archaeal genes transcribed by RNA polymerase. Facilitates transcription initiation by enhancing TATA-box recognition by TATA-box-binding protein (Tbp), and transcription factor B (Tfb) and RNA polymerase recruitment. Not absolutely required for transcription in vitro, but particularly important in cases where Tbp or Tfb function is not optimal. It dynamically alters the nucleic acid-binding properties of RNA polymerases by stabilizing the initiation complex and destabilizing elongation complexes. Seems to translocate with the RNA polymerase following initiation and acts by binding to the non template strand of the transcription bubble in elongation complexes. This Cenarchaeum symbiosum (strain A) protein is Transcription factor E.